Here is a 1255-residue protein sequence, read N- to C-terminus: Period circadian protein homolog 2 (1255 aa).

A disordered region spans residues 1 to 79 (MNGYAEFPPS…EPPDARQSPD (79 aa)). Positions 35-56 (SSGSSGHETNENCSTGRDSQGS) are enriched in polar residues. The Nuclear export signal 1 signature appears at 111-120 (LIKTLKELKV). One can recognise a PAS 1 domain in the interval 181–248 (VTSEHIVKNA…FHSFTSPYKL (68 aa)). Positions 308-312 (LCCLL) match the LXXLL motif. The PAS 2 domain maps to 321–387 (YEAPRIPPEK…MLAIHKKILQ (67 aa)). Residues 395 to 438 (YSPIRFRARNGEYITLDTSWSSFINPWSRKISFIIGRHKVRVGP) enclose the PAC domain. The Nuclear export signal 2 motif lies at 462–471 (LTEQIHRLLL). Disordered stretches follow at residues 473–557 (PVPH…AVPA) and 617–646 (RSSD…SRTG). The tract at residues 480 to 484 (SGYGS) is important for protein stability. Residues 504-516 (NGHEDSRRRRAEI) are compositionally biased toward basic and acidic residues. The CSNK1E binding domain stretch occupies residues 512–717 (RRAEICKNGN…ALACGLSQEK (206 aa)). 4 positions are modified to phosphoserine: serine 527, serine 530, serine 533, and serine 540. Residues 529-541 (YSHESGEQKKKSV) show a composition bias toward basic and acidic residues. Serine 662, serine 696, serine 700, serine 714, serine 766, and serine 771 each carry phosphoserine. Disordered stretches follow at residues 764–838 (ERSK…DTSQ) and 931–985 (FPSH…QSRS). The Nuclear localization signal signature appears at 789–805 (KKTGKNRKLKSKRVKPR). Positions 790 to 803 (KTGKNRKLKSKRVK) are enriched in basic residues. Polar residues-rich tracts occupy residues 829–838 (TAWSPSDTSQ) and 936–956 (TLTS…TSIP). Residues 888–1071 (QFAVQPPPFP…NEDLCSASGS (184 aa)) form an interaction with PPARG region. Serine 945 bears the Phosphoserine mark. Residues 959–972 (PCACPATRATPPSA) are compositionally biased toward low complexity. Serine 977 bears the Phosphoserine mark. A Nuclear export signal 3 motif is present at residues 989–996 (LQLNLLQL). Residues 1018 to 1050 (VGADCKPGTSRDQQPKAPLTRDEPSDTQNSDAL) are disordered. The short motif at 1057–1061 (LNLLL) is the LXXLL element. Residues 1077 to 1106 (LGSGSLGCDASPSGAGSSDTSHTSKYFGSI) form a disordered region. Residues 1090–1106 (GAGSSDTSHTSKYFGSI) show a composition bias toward polar residues. Serine 1124 carries the phosphoserine modification. The CRY binding domain stretch occupies residues 1155 to 1255 (SRNLEAVLKE…PLNHRIEEQT (101 aa)). Residues 1231-1255 (GLSEVSDTKEDENGSPLNHRIEEQT) are disordered.

As to quaternary structure, homodimer. Component of the circadian core oscillator, which includes the CRY proteins, CLOCK or NPAS2, BMAL1 or BMAL2, CSNK1D and/or CSNK1E, TIMELESS, and the PER proteins. Interacts with CLOCK-BMAL1 (off DNA). Interacts with BMAL2. Interacts directly with PER1 and PER3, and through a C-terminal domain, with CRY1 and CRY2. Interacts (via PAS 2 domain) with TIMELESS. Interacts with NFIL3. Different large complexes have been identified with different repressive functions. The core of PER complexes is composed of at least PER1, PER2, PER3, CRY1, CRY2, CSNK1D and/or CSNK1E. The large PER complex involved in the repression of transcriptional termination is composed of at least PER2, CDK9, DDX5, DHX9, NCBP1 and POLR2A (active). The large PER complex involved in the histone deacetylation is composed of at least HDAC1, PER2, SFPQ and SIN3A. The large PER complex involved in the histone methylation is composed of at least PER2, CBX3, TRIM28, SUV39H1 and/or SUV39H2; CBX3 mediates the formation of the complex. Interacts with SETX; the interaction inhibits termination of circadian target genes. Interacts with the nuclear receptors HNF4A, NR1D1, NR4A2, RORA, PPARA, PPARG and THRA; the interaction with at least PPARG is ligand dependent. Interacts with PML. Interacts (phosphorylated) with BTRC and FBXW11; the interactions trigger proteasomal degradation. Interacts with NONO and SFPQ. Interacts with CAVIN3. Interacts with MAGEL2. Interacts with MAP1LC3B. Interacts with HNF4A. In terms of processing, acetylated. Deacetylated by SIRT1, resulting in decreased protein stability. Deacetylated by SIRT6, preventing its degradation by the proteasome, resulting in increased protein stability. Phosphorylated by CSNK1E and CSNK1D. Phosphorylation results in PER2 protein degradation. May be dephosphorylated by PP1. Post-translationally, ubiquitinated, leading to its proteasomal degradation. Ubiquitination may be inhibited by CRY1. As to expression, widely expressed. Found in heart, brain, placenta, lung, liver, skeleatal muscle, kidney and pancreas. High levels in skeletal muscle and pancreas. Low levels in lung. Isoform 2 is expressed in keratinocytes (at protein level).

It localises to the nucleus. The protein resides in the cytoplasm. It is found in the perinuclear region. Its subcellular location is the nucleolus. In terms of biological role, transcriptional repressor which forms a core component of the circadian clock. The circadian clock, an internal time-keeping system, regulates various physiological processes through the generation of approximately 24 hour circadian rhythms in gene expression, which are translated into rhythms in metabolism and behavior. It is derived from the Latin roots 'circa' (about) and 'diem' (day) and acts as an important regulator of a wide array of physiological functions including metabolism, sleep, body temperature, blood pressure, endocrine, immune, cardiovascular, and renal function. Consists of two major components: the central clock, residing in the suprachiasmatic nucleus (SCN) of the brain, and the peripheral clocks that are present in nearly every tissue and organ system. Both the central and peripheral clocks can be reset by environmental cues, also known as Zeitgebers (German for 'timegivers'). The predominant Zeitgeber for the central clock is light, which is sensed by retina and signals directly to the SCN. The central clock entrains the peripheral clocks through neuronal and hormonal signals, body temperature and feeding-related cues, aligning all clocks with the external light/dark cycle. Circadian rhythms allow an organism to achieve temporal homeostasis with its environment at the molecular level by regulating gene expression to create a peak of protein expression once every 24 hours to control when a particular physiological process is most active with respect to the solar day. Transcription and translation of core clock components (CLOCK, NPAS2, BMAL1, BMAL2, PER1, PER2, PER3, CRY1 and CRY2) plays a critical role in rhythm generation, whereas delays imposed by post-translational modifications (PTMs) are important for determining the period (tau) of the rhythms (tau refers to the period of a rhythm and is the length, in time, of one complete cycle). A diurnal rhythm is synchronized with the day/night cycle, while the ultradian and infradian rhythms have a period shorter and longer than 24 hours, respectively. Disruptions in the circadian rhythms contribute to the pathology of cardiovascular diseases, cancer, metabolic syndrome and aging. A transcription/translation feedback loop (TTFL) forms the core of the molecular circadian clock mechanism. Transcription factors, CLOCK or NPAS2 and BMAL1 or BMAL2, form the positive limb of the feedback loop, act in the form of a heterodimer and activate the transcription of core clock genes and clock-controlled genes (involved in key metabolic processes), harboring E-box elements (5'-CACGTG-3') within their promoters. The core clock genes: PER1/2/3 and CRY1/2 which are transcriptional repressors form the negative limb of the feedback loop and interact with the CLOCK|NPAS2-BMAL1|BMAL2 heterodimer inhibiting its activity and thereby negatively regulating their own expression. This heterodimer also activates nuclear receptors NR1D1/2 and RORA/B/G, which form a second feedback loop and which activate and repress BMAL1 transcription, respectively. PER1 and PER2 proteins transport CRY1 and CRY2 into the nucleus with appropriate circadian timing, but also contribute directly to repression of clock-controlled target genes through interaction with several classes of RNA-binding proteins, helicases and others transcriptional repressors. PER appears to regulate circadian control of transcription by at least three different modes. First, interacts directly with the CLOCK-BMAL1 at the tail end of the nascent transcript peak to recruit complexes containing the SIN3-HDAC that remodel chromatin to repress transcription. Second, brings H3K9 methyltransferases such as SUV39H1 and SUV39H2 to the E-box elements of the circadian target genes, like PER2 itself or PER1. The recruitment of each repressive modifier to the DNA seems to be very precisely temporally orchestrated by the large PER complex, the deacetylases acting before than the methyltransferases. Additionally, large PER complexes are also recruited to the target genes 3' termination site through interactions with RNA-binding proteins and helicases that may play a role in transcription termination to regulate transcription independently of CLOCK-BMAL1 interactions. Recruitment of large PER complexes to the elongating polymerase at PER and CRY termination sites inhibited SETX action, impeding RNA polymerase II release and thereby repressing transcriptional reinitiation. May propagate clock information to metabolic pathways via the interaction with nuclear receptors. Coactivator of PPARA and corepressor of NR1D1, binds rhythmically at the promoter of nuclear receptors target genes like BMAL1 or G6PC1. Directly and specifically represses PPARG proadipogenic activity by blocking PPARG recruitment to target promoters and thereby inhibiting transcriptional activation. Required for fatty acid and lipid metabolism, is involved as well in the regulation of circulating insulin levels. Plays an important role in the maintenance of cardiovascular functions through the regulation of NO and vasodilatatory prostaglandins production in aortas. Controls circadian glutamate uptake in synaptic vesicles through the regulation of VGLUT1 expression. May also be involved in the regulation of inflammatory processes. Represses the CLOCK-BMAL1 induced transcription of BHLHE40/DEC1 and ATF4. Negatively regulates the formation of the TIMELESS-CRY1 complex by competing with TIMELESS for binding to CRY1. The sequence is that of Period circadian protein homolog 2 (PER2) from Homo sapiens (Human).